The chain runs to 180 residues: Magnetosome protein MamS (180 aa).

The Cytoplasmic portion of the chain corresponds to 1 to 21 (MDFRPDQVVARIRGAVEGALT). Residues 22–42 (AQSVLGIGGALVLILVVIALL) form a helical membrane-spanning segment. The Lumenal segment spans residues 43 to 180 (PDRFTRGEGK…EGLALWMTVQ (138 aa)).

The protein belongs to the magnetosome MamS family.

The protein localises to the magnetosome membrane. In terms of biological role, may play a role in magnetite crystal growth and size. The polypeptide is Magnetosome protein MamS (Magnetospirillum gryphiswaldense (strain DSM 6361 / JCM 21280 / NBRC 15271 / MSR-1)).